The chain runs to 142 residues: 3-hydroxyacyl-[acyl-carrier-protein] dehydratase FabZ (142 aa).

His-47 is an active-site residue.

The protein belongs to the thioester dehydratase family. FabZ subfamily.

It is found in the cytoplasm. The catalysed reaction is a (3R)-hydroxyacyl-[ACP] = a (2E)-enoyl-[ACP] + H2O. In terms of biological role, involved in unsaturated fatty acids biosynthesis. Catalyzes the dehydration of short chain beta-hydroxyacyl-ACPs and long chain saturated and unsaturated beta-hydroxyacyl-ACPs. The protein is 3-hydroxyacyl-[acyl-carrier-protein] dehydratase FabZ of Thermoanaerobacter pseudethanolicus (strain ATCC 33223 / 39E) (Clostridium thermohydrosulfuricum).